Here is a 408-residue protein sequence, read N- to C-terminus: Na(+)-translocating NADH-quinone reductase subunit F (408 aa).

Residues Ile4–Phe24 traverse the membrane as a helical segment. Residues Gly33 to Ile127 enclose the 2Fe-2S ferredoxin-type domain. [2Fe-2S] cluster contacts are provided by Cys70, Cys76, Cys79, and Cys111. Residues Ile130 to Lys270 form the FAD-binding FR-type domain.

This sequence belongs to the NqrF family. Composed of six subunits; NqrA, NqrB, NqrC, NqrD, NqrE and NqrF. The cofactor is [2Fe-2S] cluster. Requires FAD as cofactor.

Its subcellular location is the cell inner membrane. It catalyses the reaction a ubiquinone + n Na(+)(in) + NADH + H(+) = a ubiquinol + n Na(+)(out) + NAD(+). NQR complex catalyzes the reduction of ubiquinone-1 to ubiquinol by two successive reactions, coupled with the transport of Na(+) ions from the cytoplasm to the periplasm. The first step is catalyzed by NqrF, which accepts electrons from NADH and reduces ubiquinone-1 to ubisemiquinone by a one-electron transfer pathway. The chain is Na(+)-translocating NADH-quinone reductase subunit F from Pseudoalteromonas atlantica (strain T6c / ATCC BAA-1087).